A 331-amino-acid polypeptide reads, in one-letter code: Reticulocalbin-1 (331 aa).

The N-terminal stretch at 1–29 (MARGGRGRRLGLALGLLLALVLAPRVLRA) is a signal peptide. Asparagine 53 carries N-linked (GlcNAc...) asparagine glycosylation. Serine 55 is subject to Phosphoserine. Threonine 76 is subject to Phosphothreonine. EF-hand domains are found at residues 79 to 114 (ESKERLGKIVDRIDNDGDGFVTTEELKTWIKRVQKR), 115 to 150 (YIFDNVAKVWKDYDRDKDDKISWEEYKQATYGYYLG), 166 to 201 (KMLPRDERRFKAADLNGDLTATREEFTAFLHPEEFE), 203 to 238 (MKEIVVLETLEDIDKNGDGFVDQDEYIADMFSHEEN), 244 to 279 (WVLSEREQFNEFRDLNKDGKLDKDEIRHWILPQDYD), and 280 to 315 (HAQAEARHLVYESDKNKDEKLTKEEILENWNMFVGS). The residue at position 80 (serine 80) is a Phosphoserine; by FAM20C. Ca(2+) contacts are provided by aspartate 92, aspartate 94, aspartate 96, glutamate 103, aspartate 128, aspartate 130, aspartate 132, lysine 134, glutamate 139, aspartate 179, asparagine 181, aspartate 183, threonine 185, glutamate 190, aspartate 216, asparagine 218, aspartate 220, glutamate 227, aspartate 257, asparagine 259, aspartate 261, lysine 263, glutamate 268, aspartate 293, asparagine 295, aspartate 297, lysine 299, and glutamate 304. The Prevents secretion from ER signature appears at 328–331 (HDEL).

The protein belongs to the CREC family. O-glycosylated. O-mannosylated by POMT1 and POMT2 and elongated by POMGNT1.

It is found in the endoplasmic reticulum lumen. Functionally, may regulate calcium-dependent activities in the endoplasmic reticulum lumen or post-ER compartment. This chain is Reticulocalbin-1 (RCN1), found in Homo sapiens (Human).